The chain runs to 853 residues: MSTIENFDAHTPMMQQYLKLKAQHPEILLFYRMGDFYELFYDDAKRASQLLDISLTKRGASAGEPIPMAGIPYHAVENYLAKLVNQGESVAICEQIGDPATSKGPVERKVVRIVTPGTISDEALLQERQDNLLAAIWQDSKGFGYATLDISSGRFRLSEPADRETMAAELQRTNPAELLYAEDFAEMSLIEGRRGLRRRPLWEFEIDTARQQLNLQFGTRDLVGFGVENAPRGLCAAGCLLQYAKDTQRTTLPHIRSITMERQQDSIIMDAATRRNLEITQNLAGGAENTLASVLDCTVTPMGSRMLKRWLHMPVRDTRVLLERQQTIGALQDFTAELQPVLRQVGDLERILARLALRTARPRDLARMRHAFQQLPELRAQLENVDSAPVQALREKMGEFAELRDLLERAIIDTPPVLVRDGGVIATGYNEELDEWRALADGATDYLERLEVRERERTGLDTLKVGFNAVHGYYIQISRGQSHLAPINYMRRQTLKNAERYIIPELKEYEDKVLTSKGKALALEKQLYEELFDLLLPHLEALQQSASALAELDVLVNLAERAYTLNYTCPTFIDKPGIRITEGRHPVVEQVLNEPFIANPLNLSPQRRMLIITGPNMGGKSTYMRQTALIALMAYIGSYVPAQKVEIGPIDRIFTRVGAADDLASGRSTFMVEMTETANILHNATEYSLVLMDEIGRGTSTYDGLSLAWACAENLANKIKALTLFATHYFELTQLPEKMEGVANVHLDALEHGDTIAFMHSVQDGAASKSYGLAVAALAGVPKEVIKRARQKLRELESISPNAAATQVDGTQMSLLSVPEETSPAVEALENLDPDSLTPRQALEWIYRLKSLV.

Residue 614–621 (GPNMGGKS) coordinates ATP.

Belongs to the DNA mismatch repair MutS family.

In terms of biological role, this protein is involved in the repair of mismatches in DNA. It is possible that it carries out the mismatch recognition step. This protein has a weak ATPase activity. The sequence is that of DNA mismatch repair protein MutS from Escherichia coli O1:K1 / APEC.